The sequence spans 129 residues: Histone H2A.J (129 aa).

The interval 1–22 (MSGRGKQGGKVRAKAKSRSSRA) is disordered. N6-acetyllysine occurs at positions 6 and 10. Residues 7–19 (QGGKVRAKAKSRS) show a composition bias toward basic residues. Lys-10 is subject to N6-lactoyllysine; alternate. Gln-105 carries the post-translational modification N5-methylglutamine. Position 121 is a phosphothreonine; by DCAF1 (Thr-121).

This sequence belongs to the histone H2A family. In terms of assembly, the nucleosome is a histone octamer containing two molecules each of H2A, H2B, H3 and H4 assembled in one H3-H4 heterotetramer and two H2A-H2B heterodimers. The octamer wraps approximately 147 bp of DNA. In terms of processing, glutamine methylation at Gln-105 (H2AQ104me) by FBL is specifically dedicated to polymerase I. It is present at 35S ribosomal DNA locus and impairs binding of the FACT complex. Monoubiquitination of Lys-120 (H2AXK119ub) gives a specific tag for epigenetic transcriptional repression. Following DNA double-strand breaks (DSBs), it is ubiquitinated through 'Lys-63' linkage of ubiquitin moieties. Post-translationally, phosphorylation on Ser-2 (H2AS1ph) is enhanced during mitosis. Phosphorylation on Ser-2 by RPS6KA5/MSK1 directly represses transcription. Acetylation of H3 inhibits Ser-2 phosphorylation by RPS6KA5/MSK1. Phosphorylation at Thr-121 (H2AT120ph) by DCAF1 is present in the regulatory region of many tumor suppresor genes and down-regulates their transcription.

The protein resides in the nucleus. It localises to the chromosome. Core component of nucleosome. Nucleosomes wrap and compact DNA into chromatin, limiting DNA accessibility to the cellular machineries which require DNA as a template. Histones thereby play a central role in transcription regulation, DNA repair, DNA replication and chromosomal stability. DNA accessibility is regulated via a complex set of post-translational modifications of histones, also called histone code, and nucleosome remodeling. In Bos taurus (Bovine), this protein is Histone H2A.J.